The sequence spans 453 residues: Ribulose bisphosphate carboxylase large chain (453 aa).

Positions 1–2 (MS) are excised as a propeptide. N-acetylproline is present on P3. Position 14 is an N6,N6,N6-trimethyllysine (K14). Substrate-binding residues include N123 and T173. K175 functions as the Proton acceptor in the catalytic mechanism. K177 contributes to the substrate binding site. Mg(2+)-binding residues include K201, D203, and E204. K201 is modified (N6-carboxylysine). The active-site Proton acceptor is the H294. Residues R295, H327, and S379 each contribute to the substrate site.

Belongs to the RuBisCO large chain family. Type I subfamily. In terms of assembly, heterohexadecamer of 8 large chains and 8 small chains; disulfide-linked. The disulfide link is formed within the large subunit homodimers. Mg(2+) serves as cofactor. Post-translationally, the disulfide bond which can form in the large chain dimeric partners within the hexadecamer appears to be associated with oxidative stress and protein turnover.

It is found in the plastid. Its subcellular location is the chloroplast. The catalysed reaction is 2 (2R)-3-phosphoglycerate + 2 H(+) = D-ribulose 1,5-bisphosphate + CO2 + H2O. The enzyme catalyses D-ribulose 1,5-bisphosphate + O2 = 2-phosphoglycolate + (2R)-3-phosphoglycerate + 2 H(+). RuBisCO catalyzes two reactions: the carboxylation of D-ribulose 1,5-bisphosphate, the primary event in carbon dioxide fixation, as well as the oxidative fragmentation of the pentose substrate in the photorespiration process. Both reactions occur simultaneously and in competition at the same active site. The protein is Ribulose bisphosphate carboxylase large chain of Galium corsicum.